We begin with the raw amino-acid sequence, 198 residues long: ATP-dependent Clp protease proteolytic subunit (198 aa).

The active-site Nucleophile is S98. H123 is a catalytic residue.

Belongs to the peptidase S14 family. Fourteen ClpP subunits assemble into 2 heptameric rings which stack back to back to give a disk-like structure with a central cavity, resembling the structure of eukaryotic proteasomes.

The protein resides in the cytoplasm. It carries out the reaction Hydrolysis of proteins to small peptides in the presence of ATP and magnesium. alpha-casein is the usual test substrate. In the absence of ATP, only oligopeptides shorter than five residues are hydrolyzed (such as succinyl-Leu-Tyr-|-NHMec, and Leu-Tyr-Leu-|-Tyr-Trp, in which cleavage of the -Tyr-|-Leu- and -Tyr-|-Trp bonds also occurs).. Functionally, cleaves peptides in various proteins in a process that requires ATP hydrolysis. Has a chymotrypsin-like activity. Plays a major role in the degradation of misfolded proteins. This is ATP-dependent Clp protease proteolytic subunit from Listeria innocua serovar 6a (strain ATCC BAA-680 / CLIP 11262).